We begin with the raw amino-acid sequence, 427 residues long: Glutamate-1-semialdehyde 2,1-aminomutase (427 aa).

Lys-268 is subject to N6-(pyridoxal phosphate)lysine.

The protein belongs to the class-III pyridoxal-phosphate-dependent aminotransferase family. HemL subfamily. The cofactor is pyridoxal 5'-phosphate.

The protein localises to the cytoplasm. It carries out the reaction (S)-4-amino-5-oxopentanoate = 5-aminolevulinate. It participates in porphyrin-containing compound metabolism; protoporphyrin-IX biosynthesis; 5-aminolevulinate from L-glutamyl-tRNA(Glu): step 2/2. This chain is Glutamate-1-semialdehyde 2,1-aminomutase, found in Methanococcus maripaludis (strain C7 / ATCC BAA-1331).